A 322-amino-acid polypeptide reads, in one-letter code: RNA pseudouridine synthase 1 (322 aa).

The active site involves Asp120.

Belongs to the pseudouridine synthase RluA family.

The enzyme catalyses a uridine in RNA = a pseudouridine in RNA. This chain is RNA pseudouridine synthase 1, found in Arabidopsis thaliana (Mouse-ear cress).